Reading from the N-terminus, the 87-residue chain is Putative defensin-like protein 231 (87 aa).

The first 26 residues, 1–26 (MKFATCFLVSYVLVFLVLSVCKEVEA), serve as a signal peptide directing secretion. 4 cysteine pairs are disulfide-bonded: Cys30–Cys85, Cys40–Cys66, Cys48–Cys79, and Cys64–Cys81.

The protein belongs to the DEFL family.

It localises to the secreted. This is Putative defensin-like protein 231 (SCRL25) from Arabidopsis thaliana (Mouse-ear cress).